Reading from the N-terminus, the 387-residue chain is Cysteine desulfurase IscS (387 aa).

Pyridoxal 5'-phosphate-binding positions include 73 to 74 (AT), asparagine 155, glutamine 183, and 203 to 205 (SAH). Residue lysine 206 is modified to N6-(pyridoxal phosphate)lysine. Threonine 241 contributes to the pyridoxal 5'-phosphate binding site. The Cysteine persulfide intermediate role is filled by cysteine 328. Residue cysteine 328 coordinates [2Fe-2S] cluster.

It belongs to the class-V pyridoxal-phosphate-dependent aminotransferase family. NifS/IscS subfamily. As to quaternary structure, homodimer. Forms a heterotetramer with IscU, interacts with other sulfur acceptors. Pyridoxal 5'-phosphate is required as a cofactor.

It is found in the cytoplasm. The enzyme catalyses (sulfur carrier)-H + L-cysteine = (sulfur carrier)-SH + L-alanine. The protein operates within cofactor biosynthesis; iron-sulfur cluster biosynthesis. Its function is as follows. Master enzyme that delivers sulfur to a number of partners involved in Fe-S cluster assembly, tRNA modification or cofactor biosynthesis. Catalyzes the removal of elemental sulfur atoms from cysteine to produce alanine. Functions as a sulfur delivery protein for Fe-S cluster synthesis onto IscU, an Fe-S scaffold assembly protein, as well as other S acceptor proteins. The protein is Cysteine desulfurase IscS of Helicobacter pylori (strain P12).